The sequence spans 1225 residues: MPFYRRTVVPQRLCPRNPPQQLAELRDVSHLAALSLLRQLADLCGHSLALLEDLEGHLLALGRRTDSLYRRTVRLRRRLPCRLLGPEEDEEELAAANSGRENATATAHSRSSWRQPVNVFLSSGRPPSVEELLREAQLNLQSLLQEEYEEQYSEARLVGQTFRSSDEATKPTPNPRPQSARRLEFILMPTKRQLSEDETTTQGVRAPEASLSLSTTADKQTAWNSLFPLPILEEKRWPQLCSTQSDIVPINISGQQFDKHASLRHSLFNTETAVNPKSTLRRRRTIIGFSNFSQRDQGHSNSPAGSVAHSTTSDIRPSHSVPEGVHGRVAVGQDARFPSLTSPVLRTPSSEPDEPHQARSGPNPPGMESMGMVYSVPSSCNGPTESTFSTSWKGDAFTYMTPSATSQSNQVNENGKNPSCGNSWVSLNKVPPLVPKEAATLLVARDNPAGCSGSAGYPERLIQQRHMPERPSKIGLLTSGTSRLETGPGGASRFRERSLSVPTDSGTTDVDYDEEQKANEACALPFASTSSEGSNSADNIASLSAQQEAQHRRQRSKSISLRKAKKKPSPPTRSVSLVKDEPGLLPEGGSALPKDQRPKSLCLSLEHQGHHSSHPDAQGHPAIPNHKDPESTQFSHHWYLTDWKSGDTYQSLSSSSTATGTTVIECTQVQGSSESLASPSTSRATTPSQLSIEVEAREISSPGRPPGLMSPSSGYSSQSETPTPTVSMSLTLGHLPPPSSSVRVRPVVPERKSSLPPTSPMEKFPKSRLSFDLPLTSSPNLDLSGMSISIRSKTKVSRHHSETNFGVKLAQKTNPNQPIMPMVTQSDLRSVRLRSVSKSEPEDDIESPEYAEEPRAEEVFTLPERKTKPPVAEKPPVARRPPSLVHKPPSVPEEYALTSPTLAMPPRSSIQHARPLPQDSYTVVRKPKPSSFPDGRSPGESTAPSSLVFTPFASSSDAFFSGTQQPPQGSVEDEGPKVRVLPERISLQSQEEAEKKKGKIPPPVPKKPSVLYLPLTSPTAQMEAYVAEPRLPLSPIITLEEDTKCPATGDDLQSLGQRVTSTPQADSEREASPLGSSVEPGTEEKSLISDKTAEWIAEDDDDVFVASRTTEDLFTVIHRSKRKLLGWKEPGEAFVGGRTSSHSPIKNTAESPISESTATAGSGSSANLDAGRNDDFKALLQKKGSKATPRSRPSAAELLKTTNPLARRIIAQFSKDYETTDNPST.

9 disordered regions span residues 161 to 180 (TFRS…PQSA), 193 to 213 (QLSE…SLSL), 291 to 371 (NFSQ…ESMG), 466 to 510 (HMPE…TTDV), 543 to 632 (LSAQ…PEST), 670 to 766 (QGSS…KFPK), 812 to 1009 (KTNP…KKPS), 1042 to 1093 (DTKC…DKTA), and 1128 to 1203 (KEPG…KTTN). Composition is skewed to polar residues over residues 291-315 (NFSQ…TSDI) and 339-350 (SLTSPVLRTPSS). Serine 500 carries the post-translational modification Phosphoserine. Residues 552–568 (RRQRSKSISLRKAKKKP) are compositionally biased toward basic residues. A Phosphoserine modification is found at serine 576. Residues 675–688 (SLASPSTSRATTPS) are compositionally biased toward low complexity. Residue serine 691 is modified to Phosphoserine. Composition is skewed to polar residues over residues 710–730 (SPSS…SMSL) and 812–827 (KTNP…TQSD). The segment covering 841–851 (PEDDIESPEYA) has biased composition (acidic residues). Residues 852–867 (EEPRAEEVFTLPERKT) are compositionally biased toward basic and acidic residues. 2 stretches are compositionally biased toward polar residues: residues 939–968 (GEST…QPPQ) and 1054–1065 (SLGQRVTSTPQA). Position 1054 is a phosphoserine (serine 1054). Basic and acidic residues predominate over residues 1082 to 1093 (TEEKSLISDKTA). A compositionally biased stretch (polar residues) spans 1138-1155 (RTSSHSPIKNTAESPISE). The span at 1156–1166 (STATAGSGSSA) shows a compositional bias: low complexity.

This sequence belongs to the NHS family.

The polypeptide is NHS-like protein 2 (Homo sapiens (Human)).